Reading from the N-terminus, the 467-residue chain is MSKFPTVSEILSGKVAVGEEVAVRGWVRTRRDSKAGLSFLAVYDGSCFDPIQSIINNDLANYNDEVLRLTAGCSVIVTGKVVESPAEGQAVELHATHVEVVGWVEDPDTYPMAAKRHSIEYLREVAHLRPRTNLIGAVARVRHCLAQAIHRFFNEQGFYWVATPLITASDTEGAGEMFRVSTLDLENLPRTEEGKVDFSQDFFGKESFLTVSGQLNGETYACALSKVYTFGPTFRAENSNTTRHLAEFWMVEPEFAFATLADNAKLAEDMLKYVFKAVLEERKDDMQFFAKHIDKDVITRLENFIAAPFAQVDYTDAIEILLKSGKEFEFPVSWGIDLSSEHERFLAEEYFKSPVVVKNYPKDIKAFYMRLNDDGKTVAAMDVLAPGIGEIIGGSQREERLDVLDTRMVEMGLNPEDYWWYRDLRKYGTVPHSGFGLGFERLIVYVTGLQNIREVIPFPRAPRNANF.

Belongs to the class-II aminoacyl-tRNA synthetase family. In terms of assembly, homodimer.

Its subcellular location is the cytoplasm. The catalysed reaction is tRNA(Asn) + L-asparagine + ATP = L-asparaginyl-tRNA(Asn) + AMP + diphosphate + H(+). In Actinobacillus pleuropneumoniae serotype 5b (strain L20), this protein is Asparagine--tRNA ligase.